The primary structure comprises 327 residues: Ribose 1,5-bisphosphate isomerase (327 aa).

Residues Arg25–Ala28 and Arg68 each bind substrate. Catalysis depends on Cys133, which acts as the Proton acceptor. Residue Asp202 is the Proton donor of the active site. Substrate-binding positions include Asn212–Lys213 and Lys238.

This sequence belongs to the eIF-2B alpha/beta/delta subunits family. R15P isomerase subfamily.

The enzyme catalyses alpha-D-ribose 1,5-bisphosphate = D-ribulose 1,5-bisphosphate. In terms of biological role, isomerase involved in the non-carboxylating pentose bisphosphate pathway, a nucleoside degradation pathway present in some halophilic archaea. Catalyzes the isomerization of ribose 1,5-bisphosphate (R15P) to ribulose 1,5-bisphosphate (RuBP). The protein is Ribose 1,5-bisphosphate isomerase of Haloterrigena turkmenica (strain ATCC 51198 / DSM 5511 / JCM 9101 / NCIMB 13204 / VKM B-1734 / 4k) (Halococcus turkmenicus).